The sequence spans 258 residues: Acyl-[acyl-carrier-protein]--UDP-N-acetylglucosamine O-acyltransferase (258 aa).

The protein belongs to the transferase hexapeptide repeat family. LpxA subfamily. As to quaternary structure, homotrimer.

The protein resides in the cytoplasm. The catalysed reaction is a (3R)-hydroxyacyl-[ACP] + UDP-N-acetyl-alpha-D-glucosamine = a UDP-3-O-[(3R)-3-hydroxyacyl]-N-acetyl-alpha-D-glucosamine + holo-[ACP]. It functions in the pathway glycolipid biosynthesis; lipid IV(A) biosynthesis; lipid IV(A) from (3R)-3-hydroxytetradecanoyl-[acyl-carrier-protein] and UDP-N-acetyl-alpha-D-glucosamine: step 1/6. Its function is as follows. Involved in the biosynthesis of lipid A, a phosphorylated glycolipid that anchors the lipopolysaccharide to the outer membrane of the cell. This Myxococcus xanthus (strain DK1622) protein is Acyl-[acyl-carrier-protein]--UDP-N-acetylglucosamine O-acyltransferase.